The chain runs to 264 residues: Thymidylate synthase (264 aa).

Residue Arg-21 coordinates dUMP. His-51 provides a ligand contact to (6R)-5,10-methylene-5,6,7,8-tetrahydrofolate. DUMP is bound at residue 126–127 (RR). Cys-146 (nucleophile) is an active-site residue. Residues 166 to 169 (RSAD), Asn-177, and 207 to 209 (HLY) each bind dUMP. Asp-169 contributes to the (6R)-5,10-methylene-5,6,7,8-tetrahydrofolate binding site. Residue Ser-263 participates in (6R)-5,10-methylene-5,6,7,8-tetrahydrofolate binding.

It belongs to the thymidylate synthase family. Bacterial-type ThyA subfamily. In terms of assembly, homodimer.

The protein localises to the cytoplasm. The enzyme catalyses dUMP + (6R)-5,10-methylene-5,6,7,8-tetrahydrofolate = 7,8-dihydrofolate + dTMP. Its pathway is pyrimidine metabolism; dTTP biosynthesis. In terms of biological role, catalyzes the reductive methylation of 2'-deoxyuridine-5'-monophosphate (dUMP) to 2'-deoxythymidine-5'-monophosphate (dTMP) while utilizing 5,10-methylenetetrahydrofolate (mTHF) as the methyl donor and reductant in the reaction, yielding dihydrofolate (DHF) as a by-product. This enzymatic reaction provides an intracellular de novo source of dTMP, an essential precursor for DNA biosynthesis. The chain is Thymidylate synthase from Shouchella clausii (strain KSM-K16) (Alkalihalobacillus clausii).